We begin with the raw amino-acid sequence, 78 residues long: Apolipoprotein C-I (78 aa).

The N-terminal stretch at 1 to 26 is a signal peptide; the sequence is MRLILWLPVLVVVLLMVLEGPAPAQG.

This sequence belongs to the apolipoprotein C1 family.

Its subcellular location is the secreted. Functionally, inhibitor of lipoprotein binding to the low density lipoprotein (LDL) receptor, LDL receptor-related protein, and very low density lipoprotein (VLDL) receptor. Associates with high density lipoproteins (HDL) and the triacylglycerol-rich lipoproteins in the plasma and makes up about 10% of the protein of the VLDL and 2% of that of HDL. Appears to interfere directly with fatty acid uptake and is also the major plasma inhibitor of cholesteryl ester transfer protein (CETP). Binds free fatty acids and reduces their intracellular esterification. Modulates the interaction of APOE with beta-migrating VLDL and inhibits binding of beta-VLDL to the LDL receptor-related protein. This Lynx pardinus (Iberian lynx) protein is Apolipoprotein C-I (APOC1).